A 1066-amino-acid chain; its full sequence is Vinculin (1066 aa).

Positions 1–835 are N-terminal globular head; sequence MPVFHTRTIE…GAVAKVREAF (835 aa). A Phosphoserine modification is found at S97. Positions 168 to 208 are talin-interaction; sequence MTKMAKMIDERQQELTHQEHRVMLVNSMNTVKELLPVLISA. K173 bears the N6-acetyllysine mark. 3 repeat units span residues 259-369, 370-479, and 480-589. Residues 259 to 589 form a 3 X 112 AA tandem repeats region; it reads ASKDTEAMKR…LKDLKAQMQE (331 aa). Residues S260, S272, S275, S290, S346, and S434 each carry the phosphoserine modification. Position 496 is an N6-acetyllysine (K496). The residue at position 537 (Y537) is a Phosphotyrosine. A phosphoserine mark is found at S574, S579, and S600. 2 positions are modified to phosphothreonine: T604 and T672. S721 carries the phosphoserine modification. Positions 741-764 are interaction with ACTN4; it reads MANIQPQMLVAGATSIARRANRIL. 2 positions are modified to phosphoserine: S795 and S809. Y822 carries the phosphotyrosine modification. Positions 836–878 are linker (Pro-rich); sequence QPQEPDFPPPPPDLEQLRLTDELAPPKPPLPEGEVPPPRPPPP. The segment at 857 to 887 is disordered; that stretch reads ELAPPKPPLPEGEVPPPRPPPPEEKDEEFPE. Pro residues predominate over residues 860 to 876; sequence PPKPPLPEGEVPPPRPP. A C-terminal tail region spans residues 879-1066; sequence EEKDEEFPEQ…RWVRKTPWYQ (188 aa). 2 facilitates phospholipid membrane insertion regions span residues 935–978 and 1052–1066; these read RLVR…KRIR and AGFTLRWVRKTPWYQ. Residue Y1065 is modified to Phosphotyrosine; by SRC-type Tyr-kinases.

It belongs to the vinculin/alpha-catenin family. As to quaternary structure, exhibits self-association properties. Part of a complex composed of THSD1, PTK2/FAK1, TLN1 and VCL. Interacts with APBB1IP, NRAP and TLN1. Interacts with SYNM. Interacts with CTNNB1 and this interaction is necessary for its localization to the cell-cell junctions and for its function in regulating cell surface expression of E-cadherin. Interacts with SORBS1. Interacts with SYNM. Interacts with CTNNA1. Binds to ACTN4; this interaction triggers conformational changes. Interacts with FLII. In terms of processing, phosphorylated; on serines, threonines and tyrosines. Phosphorylation on Tyr-1065 in activated platelets affects head-tail interactions and cell spreading but has no effect on actin binding nor on localization to focal adhesion plaques. Acetylated; mainly by myristic acid but also by a small amount of palmitic acid.

The protein resides in the cell membrane. It is found in the cell junction. Its subcellular location is the adherens junction. The protein localises to the focal adhesion. It localises to the cytoplasm. The protein resides in the cytoskeleton. It is found in the sarcolemma. Its subcellular location is the cell projection. The protein localises to the podosome. Functionally, actin filament (F-actin)-binding protein involved in cell-matrix adhesion and cell-cell adhesion. Regulates cell-surface E-cadherin expression and potentiates mechanosensing by the E-cadherin complex. May also play important roles in cell morphology and locomotion. In Mus musculus (Mouse), this protein is Vinculin (Vcl).